We begin with the raw amino-acid sequence, 604 residues long: ATP-dependent RNA helicase DBP1 (604 aa).

A disordered region spans residues 1–79 (MSDGSGRYVP…RASGSGGFGG (79 aa)). The span at 32 to 45 (SRYSGNGFFSSPNR) shows a compositional bias: polar residues. Residues 138–166 (TEFKSPPLDELLLENVELANFSKPTPVQK) carry the Q motif motif. In terms of domain architecture, Helicase ATP-binding spans 169–358 (IPIVTKNRDL…RDFLKDYIFL (190 aa)). ATP is bound at residue 182-189 (AQTGSGKT). Positions 302–305 (DEAD) match the DEAD box motif. Positions 386–529 (LLDILINEID…EVPQFLVNMV (144 aa)) constitute a Helicase C-terminal domain. A disordered region spans residues 535–591 (FGRGGRNSRTGSNRGRGSNTRDYRHSNKDDWGSLGSSRRGFRSNDNRGFGNNWGSSS). The segment covering 541 to 552 (NSRTGSNRGRGS) has biased composition (low complexity). Positions 553 to 565 (NTRDYRHSNKDDW) are enriched in basic and acidic residues.

The protein belongs to the DEAD box helicase family. DDX3/DED1 subfamily.

The protein localises to the cytoplasm. The enzyme catalyses ATP + H2O = ADP + phosphate + H(+). In terms of biological role, ATP-binding RNA helicase involved in translation initiation. Remodels RNA in response to ADP and ATP concentrations by facilitating disruption, but also formation of RNA duplexes. Redundant to DED1, may be required in conditions in which DED1 expression is decreased. This chain is ATP-dependent RNA helicase DBP1 (DBP1), found in Candida glabrata (strain ATCC 2001 / BCRC 20586 / JCM 3761 / NBRC 0622 / NRRL Y-65 / CBS 138) (Yeast).